A 123-amino-acid polypeptide reads, in one-letter code: Small ribosomal subunit protein uS12 (123 aa).

Position 89 is a 3-methylthioaspartic acid (Asp-89).

It belongs to the universal ribosomal protein uS12 family. In terms of assembly, part of the 30S ribosomal subunit. Contacts proteins S8 and S17. May interact with IF1 in the 30S initiation complex.

In terms of biological role, with S4 and S5 plays an important role in translational accuracy. Functionally, interacts with and stabilizes bases of the 16S rRNA that are involved in tRNA selection in the A site and with the mRNA backbone. Located at the interface of the 30S and 50S subunits, it traverses the body of the 30S subunit contacting proteins on the other side and probably holding the rRNA structure together. The combined cluster of proteins S8, S12 and S17 appears to hold together the shoulder and platform of the 30S subunit. The sequence is that of Small ribosomal subunit protein uS12 from Syntrophobacter fumaroxidans (strain DSM 10017 / MPOB).